We begin with the raw amino-acid sequence, 215 residues long: Adenylate kinase (215 aa).

G10 to T15 contributes to the ATP binding site. The tract at residues S30–V59 is NMP. Residues T31, R36, L57–V59, G85–R88, and Q92 contribute to the AMP site. An LID region spans residues S126–D163. Residue R127 coordinates ATP. Zn(2+) contacts are provided by C130 and C133. Residue V136–Y137 participates in ATP binding. C150 and C153 together coordinate Zn(2+). Residues R160 and R171 each contribute to the AMP site. L199 is an ATP binding site.

Belongs to the adenylate kinase family. Monomer.

The protein localises to the cytoplasm. The catalysed reaction is AMP + ATP = 2 ADP. Its pathway is purine metabolism; AMP biosynthesis via salvage pathway; AMP from ADP: step 1/1. Its function is as follows. Catalyzes the reversible transfer of the terminal phosphate group between ATP and AMP. Plays an important role in cellular energy homeostasis and in adenine nucleotide metabolism. This is Adenylate kinase from Kosmotoga olearia (strain ATCC BAA-1733 / DSM 21960 / TBF 19.5.1).